A 187-amino-acid chain; its full sequence is Capsid protein VP10 (187 aa).

An intrachain disulfide couples Cys-45 to Cys-51.

The protein resides in the virion. Functionally, VP10 self-assembles, together with capsid protein VP4, to form an icosahedral caspid of 87 nm in diameter, with a T=43 symmetry and composed of 420 hexamers and 12 pentamers. VP4 proteins arrange into hexons, while VP10 proteins form the pentameric densities located at the 5-fold axes in the virion. The stoichiometry of VP4:VP10 is 42:1. The chain is Capsid protein VP10 from Sulfolobus polyhedral virus 1 (SPV1).